Here is a 265-residue protein sequence, read N- to C-terminus: Thymidylate synthase (265 aa).

Arg21 provides a ligand contact to dUMP. His51 serves as a coordination point for (6R)-5,10-methylene-5,6,7,8-tetrahydrofolate. Residue 127–128 (RR) coordinates dUMP. Cys147 functions as the Nucleophile in the catalytic mechanism. DUMP is bound by residues 167-170 (RSAD), Asn178, and 208-210 (HLY). Asp170 is a binding site for (6R)-5,10-methylene-5,6,7,8-tetrahydrofolate. Ser264 is a (6R)-5,10-methylene-5,6,7,8-tetrahydrofolate binding site.

This sequence belongs to the thymidylate synthase family. Bacterial-type ThyA subfamily. As to quaternary structure, homodimer.

The protein localises to the cytoplasm. It catalyses the reaction dUMP + (6R)-5,10-methylene-5,6,7,8-tetrahydrofolate = 7,8-dihydrofolate + dTMP. It functions in the pathway pyrimidine metabolism; dTTP biosynthesis. Its function is as follows. Catalyzes the reductive methylation of 2'-deoxyuridine-5'-monophosphate (dUMP) to 2'-deoxythymidine-5'-monophosphate (dTMP) while utilizing 5,10-methylenetetrahydrofolate (mTHF) as the methyl donor and reductant in the reaction, yielding dihydrofolate (DHF) as a by-product. This enzymatic reaction provides an intracellular de novo source of dTMP, an essential precursor for DNA biosynthesis. This is Thymidylate synthase from Neisseria gonorrhoeae.